We begin with the raw amino-acid sequence, 71 residues long: Small ribosomal subunit protein bS21 (71 aa).

It belongs to the bacterial ribosomal protein bS21 family.

This chain is Small ribosomal subunit protein bS21, found in Photobacterium profundum (strain SS9).